The sequence spans 202 residues: Xanthine phosphoribosyltransferase (202 aa).

Positions 20 and 27 each coordinate xanthine. 128-132 (ANGEA) lines the 5-phospho-alpha-D-ribose 1-diphosphate pocket. K156 contacts xanthine.

It belongs to the purine/pyrimidine phosphoribosyltransferase family. Xpt subfamily. In terms of assembly, homodimer.

It localises to the cytoplasm. It carries out the reaction XMP + diphosphate = xanthine + 5-phospho-alpha-D-ribose 1-diphosphate. The protein operates within purine metabolism; XMP biosynthesis via salvage pathway; XMP from xanthine: step 1/1. Converts the preformed base xanthine, a product of nucleic acid breakdown, to xanthosine 5'-monophosphate (XMP), so it can be reused for RNA or DNA synthesis. The chain is Xanthine phosphoribosyltransferase from Alkaliphilus metalliredigens (strain QYMF).